We begin with the raw amino-acid sequence, 109 residues long: MTSEQLLAEIREANLTYLMLAQTLIRQDKAEAVFRLGLNEEAADILASLSAAQVLKLASRNTLLCSFRVDDELVWSLLTSHNTPRKAASEATNTLHANILMASRVSEVL.

Belongs to the FlhD family. In terms of assembly, homodimer; disulfide-linked. Forms a heterohexamer composed of two FlhC and four FlhD subunits. Each FlhC binds a FlhD dimer, forming a heterotrimer, and a hexamer assembles by dimerization of two heterotrimers.

It is found in the cytoplasm. In terms of biological role, functions in complex with FlhC as a master transcriptional regulator that regulates transcription of several flagellar and non-flagellar operons by binding to their promoter region. Activates expression of class 2 flagellar genes, including fliA, which is a flagellum-specific sigma factor that turns on the class 3 genes. Also regulates genes whose products function in a variety of physiological pathways. The polypeptide is Flagellar transcriptional regulator FlhD (Acidovorax sp. (strain JS42)).